Consider the following 434-residue polypeptide: Pre-B-cell leukemia transcription factor 3 (434 aa).

The interval serine 20–glycine 41 is disordered. Residues histidine 32–glycine 41 are compositionally biased toward basic and acidic residues. The region spanning glycine 41–aspartate 234 is the PBC domain. Residues aspartate 48–glycine 127 form a PBC-A region. Positions alanine 130–aspartate 234 are PBC-B. Positions alanine 235 to isoleucine 297 form a DNA-binding region, homeobox; TALE-type. Residues asparagine 326–serine 341 show a composition bias toward low complexity. Disordered stretches follow at residues asparagine 326–aspartate 349 and leucine 403–asparagine 434. The span at leucine 403–threonine 422 shows a compositional bias: polar residues.

This sequence belongs to the TALE/PBX homeobox family. As to quaternary structure, interacts with PBXIP1. Ubiquitously expressed.

It is found in the nucleus. Transcriptional activator that binds the sequence 5'-ATCAATCAA-3'. This Homo sapiens (Human) protein is Pre-B-cell leukemia transcription factor 3 (PBX3).